Reading from the N-terminus, the 348-residue chain is UPF0283 membrane protein HAPS_0079 (348 aa).

Transmembrane regions (helical) follow at residues 57–77, 86–106, and 203–223; these read FLAALALFGIATIAQSVQWLI, IYFAFAVAFFGISLAGVGAII, and ENAIIVAVSPLALVDILMVAW.

It belongs to the UPF0283 family.

Its subcellular location is the cell inner membrane. The protein is UPF0283 membrane protein HAPS_0079 of Glaesserella parasuis serovar 5 (strain SH0165) (Haemophilus parasuis).